A 326-amino-acid polypeptide reads, in one-letter code: GTP 3',8-cyclase (326 aa).

One can recognise a Radical SAM core domain in the interval 7–240 (AFARKFYYLR…AQVFHHSDYQ (234 aa)). Arginine 16 lines the GTP pocket. Cysteine 23 and cysteine 27 together coordinate [4Fe-4S] cluster. Residue tyrosine 29 coordinates S-adenosyl-L-methionine. Cysteine 30 is a binding site for [4Fe-4S] cluster. GTP is bound at residue arginine 65. Glycine 69 is an S-adenosyl-L-methionine binding site. Position 96 (threonine 96) interacts with GTP. Serine 120 contacts S-adenosyl-L-methionine. Lysine 157 serves as a coordination point for GTP. Methionine 191 is an S-adenosyl-L-methionine binding site. The [4Fe-4S] cluster site is built by cysteine 254 and cysteine 257. 259–261 (RLR) is a GTP binding site. Cysteine 271 contributes to the [4Fe-4S] cluster binding site.

It belongs to the radical SAM superfamily. MoaA family. Monomer and homodimer. [4Fe-4S] cluster serves as cofactor.

The enzyme catalyses GTP + AH2 + S-adenosyl-L-methionine = (8S)-3',8-cyclo-7,8-dihydroguanosine 5'-triphosphate + 5'-deoxyadenosine + L-methionine + A + H(+). It functions in the pathway cofactor biosynthesis; molybdopterin biosynthesis. Functionally, catalyzes the cyclization of GTP to (8S)-3',8-cyclo-7,8-dihydroguanosine 5'-triphosphate. The chain is GTP 3',8-cyclase from Yersinia pestis.